The primary structure comprises 438 residues: Elongation factor 1-alpha (438 aa).

The region spanning 6 to 229 is the tr-type G domain; that stretch reads KPHLNIVIIG…ALDTLEVPPK (224 aa). The segment at 15 to 22 is G1; it reads GHVDHGKS. GTP is bound at residue 15-22; it reads GHVDHGKS. Ser-22 contacts Mg(2+). The G2 stretch occupies residues 71–75; it reads GVTIS. The segment at 92–95 is G3; sequence DAPG. GTP is bound by residues 92–96 and 154–157; these read DAPGH and NKMD. The G4 stretch occupies residues 154–157; that stretch reads NKMD. Positions 195 to 197 are G5; sequence SAW.

The protein belongs to the TRAFAC class translation factor GTPase superfamily. Classic translation factor GTPase family. EF-Tu/EF-1A subfamily.

It localises to the cytoplasm. The catalysed reaction is GTP + H2O = GDP + phosphate + H(+). In terms of biological role, GTP hydrolase that promotes the GTP-dependent binding of aminoacyl-tRNA to the A-site of ribosomes during protein biosynthesis. The polypeptide is Elongation factor 1-alpha (Desulfurococcus mucosus (Desulfurococcus mobilis)).